Consider the following 185-residue polypeptide: Ribosome-recycling factor (185 aa).

The protein belongs to the RRF family.

Its subcellular location is the cytoplasm. Functionally, responsible for the release of ribosomes from messenger RNA at the termination of protein biosynthesis. May increase the efficiency of translation by recycling ribosomes from one round of translation to another. In Geobacillus sp. (strain WCH70), this protein is Ribosome-recycling factor.